The sequence spans 356 residues: Protein pelota homolog (356 aa).

Belongs to the eukaryotic release factor 1 family. Pelota subfamily. Monomer. Requires a divalent metal cation as cofactor.

It localises to the cytoplasm. Its function is as follows. May function in recognizing stalled ribosomes, interact with stem-loop structures in stalled mRNA molecules, and effect endonucleolytic cleavage of the mRNA. May play a role in the release non-functional ribosomes and degradation of damaged mRNAs. Has endoribonuclease activity. In Desulfurococcus amylolyticus (strain DSM 18924 / JCM 16383 / VKM B-2413 / 1221n) (Desulfurococcus kamchatkensis), this protein is Protein pelota homolog.